We begin with the raw amino-acid sequence, 590 residues long: Putative histone-lysine N-methyltransferase PRDM6 (590 aa).

The disordered stretch occupies residues 25–87 (QLFPHGGGGP…STPASSSTSA (63 aa)). Gly residues predominate over residues 29–42 (HGGGGPLKGGGAAG). Positions 71 to 87 (ASLSSASSTPASSSTSA) are enriched in low complexity. The SET domain maps to 241–360 (REVCLCTSTV…RGTELLVWYN (120 aa)). Residues 468-490 (WKCGQCFKTFTQRILLQMHVCTQ) form a C2H2-type 1; degenerate zinc finger. 2 consecutive C2H2-type zinc fingers follow at residues 496-518 (YQCG…VVTH) and 524-546 (FKCG…IRTH). A C2H2-type 4; degenerate zinc finger spans residues 552-574 (FKCERCERSFTQATQLSRHQRMP).

It belongs to the class V-like SAM-binding methyltransferase superfamily. As to quaternary structure, interacts with HDAC1, HDAC2, HDAC3, CBX1 and EP300.

It is found in the nucleus. It catalyses the reaction L-lysyl(20)-[histone H4] + S-adenosyl-L-methionine = N(6)-methyl-L-lysyl(20)-[histone H4] + S-adenosyl-L-homocysteine + H(+). In terms of biological role, putative histone methyltransferase that acts as a transcriptional repressor of smooth muscle gene expression. Promotes the transition from differentiated to proliferative smooth muscle by suppressing differentiation and maintaining the proliferative potential of vascular smooth muscle cells. Also plays a role in endothelial cells by inhibiting endothelial cell proliferation, survival and differentiation. It is unclear whether it has histone methyltransferase activity in vivo. According to some authors, it does not act as a histone methyltransferase by itself and represses transcription by recruiting EHMT2/G9a. According to others, it possesses histone methyltransferase activity when associated with other proteins and specifically methylates 'Lys-20' of histone H4 in vitro. 'Lys-20' methylation represents a specific tag for epigenetic transcriptional repression. This is Putative histone-lysine N-methyltransferase PRDM6 (PRDM6) from Bos taurus (Bovine).